The following is a 79-amino-acid chain: Aquaporin Z (79 aa).

Helical transmembrane passes span 4–24 (LFAEFFGTYWLVFGGCGSAVF) and 33–53 (IGFAGVALAFGLTVLTMAYAV). The NPA 1 motif lies at 62-64 (NPA).

The protein belongs to the MIP/aquaporin (TC 1.A.8) family. In terms of assembly, homotetramer.

It localises to the cell membrane. It catalyses the reaction H2O(in) = H2O(out). Channel that permits osmotically driven movement of water in both directions. It is involved in the osmoregulation and in the maintenance of cell turgor during volume expansion in rapidly growing cells. It mediates rapid entry or exit of water in response to abrupt changes in osmolarity. The sequence is that of Aquaporin Z from Flavobacterium johnsoniae (Cytophaga johnsonae).